The chain runs to 319 residues: Ankyrin repeat domain-containing protein 1 (319 aa).

A disordered region spans residues 46 to 65 (KTLPANSVKQGEEQRKSEKL). The stretch at 53–89 (VKQGEEQRKSEKLREAELKKKKLEQRSKLENLEDLEI) forms a coiled coil. Residues 55-65 (QGEEQRKSEKL) are compositionally biased toward basic and acidic residues. 5 ANK repeats span residues 152 to 181 (YKRT…QIEF), 185 to 214 (LEST…KISA), 218 to 247 (LLST…DLNA), 251 to 280 (EGDT…DLKV), and 284 to 315 (AGKT…KNSR).

As to quaternary structure, interacts with TTN/titin and YBX1. In terms of tissue distribution, expressed in heart, cardiac muscle.

Its subcellular location is the nucleus. In terms of biological role, may play an important role in endothelial cell activation. May act as a nuclear transcription factor that negatively regulates the expression of cardiac genes. The polypeptide is Ankyrin repeat domain-containing protein 1 (Ankrd1) (Mus musculus (Mouse)).